A 419-amino-acid polypeptide reads, in one-letter code: tRNA(Met) cytidine acetate ligase (419 aa).

ATP contacts are provided by residues 7-20 (ITEY…HLHH), glycine 101, asparagine 163, and arginine 188.

The protein belongs to the TmcAL family.

The protein resides in the cytoplasm. It carries out the reaction cytidine(34) in elongator tRNA(Met) + acetate + ATP = N(4)-acetylcytidine(34) in elongator tRNA(Met) + AMP + diphosphate. In terms of biological role, catalyzes the formation of N(4)-acetylcytidine (ac(4)C) at the wobble position of elongator tRNA(Met), using acetate and ATP as substrates. First activates an acetate ion to form acetyladenylate (Ac-AMP) and then transfers the acetyl group to tRNA to form ac(4)C34. This chain is tRNA(Met) cytidine acetate ligase, found in Syntrophotalea carbinolica (strain DSM 2380 / NBRC 103641 / GraBd1) (Pelobacter carbinolicus).